The chain runs to 250 residues: Galectin-3 (250 aa).

A disordered region spans residues 1–60 (MADNFSLHDALSGSGNPNPQGWPGAWGNQPAGAGGYPGASYPGAYPGQAPPGAYPGQAPP). Alanine 2 bears the N-acetylalanine mark. Serine 6 and serine 12 each carry phosphoserine. Tandem repeats lie at residues 36 to 44 (YPGASYPGA), 45 to 53 (YPGQAPPGA), and 54 to 62 (YPGQAPPGA). An 8 X 9 AA tandem repeats of Y-P-G-X(3)-P-G-A region spans residues 36–109 (YPGASYPGAY…AYPATGPYGA (74 aa)). The segment covering 38-47 (GASYPGAYPG) has biased composition (low complexity). Over residues 48 to 60 (QAPPGAYPGQAPP) the composition is skewed to pro residues. A 4; approximate repeat occupies 63–69 (YPGAPGA). Repeat unit 5 spans residues 70–78 (YPGAPAPGV). A 6; approximate repeat occupies 79-88 (YPGPPSGPGA). A 7; approximate repeat occupies 89-100 (YPSSGQPSATGA). The 8; approximate repeat unit spans residues 101–109 (YPATGPYGA). Positions 118-248 (YNLPLPGGVV…DIDLTSASYT (131 aa)) constitute a Galectin domain. 181 to 187 (WGREERQ) lines the a beta-D-galactoside pocket. Serine 188 bears the Phosphoserine mark. Residues 226–241 (KKLNEISKLGISGDID) carry the Nuclear export signal motif.

As to quaternary structure, probably forms homo- or heterodimers. Interacts with DMBT1. Interacts with CD6 and ALCAM. Forms a complex with the ITGA3, ITGB1 and CSPG4. Interacts with LGALS3BP, LYPD3, ZFTRAF1 and UACA. Interacts with TRIM16; this interaction mediates autophagy of damage endomembranes. Interacts with cargo receptor TMED10; the interaction mediates the translocation from the cytoplasm into the ERGIC (endoplasmic reticulum-Golgi intermediate compartment) and thereby secretion. A major expression is found in the colonic epithelium. It is also abundant in the activated macrophages. Expressed in fetal membranes.

The protein resides in the cytoplasm. It is found in the nucleus. It localises to the secreted. In terms of biological role, galactose-specific lectin which binds IgE. May mediate with the alpha-3, beta-1 integrin the stimulation by CSPG4 of endothelial cells migration. Together with DMBT1, required for terminal differentiation of columnar epithelial cells during early embryogenesis. In the nucleus: acts as a pre-mRNA splicing factor. Involved in acute inflammatory responses including neutrophil activation and adhesion, chemoattraction of monocytes macrophages, opsonization of apoptotic neutrophils, and activation of mast cells. Together with TRIM16, coordinates the recognition of membrane damage with mobilization of the core autophagy regulators ATG16L1 and BECN1 in response to damaged endomembranes. The sequence is that of Galectin-3 from Homo sapiens (Human).